A 158-amino-acid chain; its full sequence is 2-C-methyl-D-erythritol 2,4-cyclodiphosphate synthase (158 aa).

Residues Asp-8 and His-10 each contribute to the a divalent metal cation site. 4-CDP-2-C-methyl-D-erythritol 2-phosphate is bound by residues 8–10 (DVH) and 34–35 (HS). His-42 is an a divalent metal cation binding site. 4-CDP-2-C-methyl-D-erythritol 2-phosphate is bound by residues 56 to 58 (DIG), 61 to 65 (FPDTD), 100 to 106 (AQRPKMA), 132 to 135 (TTEE), Phe-139, and Arg-142.

This sequence belongs to the IspF family. As to quaternary structure, homotrimer. A divalent metal cation serves as cofactor.

It catalyses the reaction 4-CDP-2-C-methyl-D-erythritol 2-phosphate = 2-C-methyl-D-erythritol 2,4-cyclic diphosphate + CMP. It participates in isoprenoid biosynthesis; isopentenyl diphosphate biosynthesis via DXP pathway; isopentenyl diphosphate from 1-deoxy-D-xylulose 5-phosphate: step 4/6. Involved in the biosynthesis of isopentenyl diphosphate (IPP) and dimethylallyl diphosphate (DMAPP), two major building blocks of isoprenoid compounds. Catalyzes the conversion of 4-diphosphocytidyl-2-C-methyl-D-erythritol 2-phosphate (CDP-ME2P) to 2-C-methyl-D-erythritol 2,4-cyclodiphosphate (ME-CPP) with a corresponding release of cytidine 5-monophosphate (CMP). This is 2-C-methyl-D-erythritol 2,4-cyclodiphosphate synthase from Pelobacter propionicus (strain DSM 2379 / NBRC 103807 / OttBd1).